Reading from the N-terminus, the 197-residue chain is Probable nicotinate-nucleotide adenylyltransferase (197 aa).

This sequence belongs to the NadD family.

The enzyme catalyses nicotinate beta-D-ribonucleotide + ATP + H(+) = deamido-NAD(+) + diphosphate. Its pathway is cofactor biosynthesis; NAD(+) biosynthesis; deamido-NAD(+) from nicotinate D-ribonucleotide: step 1/1. Functionally, catalyzes the reversible adenylation of nicotinate mononucleotide (NaMN) to nicotinic acid adenine dinucleotide (NaAD). In Neisseria meningitidis serogroup C (strain 053442), this protein is Probable nicotinate-nucleotide adenylyltransferase.